The chain runs to 448 residues: Chromosomal replication initiator protein DnaA (448 aa).

The interval 1–73 (MNTHLTETWE…VNALKLLTSK (73 aa)) is domain I, interacts with DnaA modulators. A domain II region spans residues 73-109 (KKYNIDFIVTTEEKIEENQKNHNNEKSNIVVNDEMST). The interval 110 to 326 (MLNPKYTFDS…GALIRIVAFS (217 aa)) is domain III, AAA+ region. 4 residues coordinate ATP: Gly154, Gly156, Lys157, and Thr158. The tract at residues 327–448 (SLTNKEISID…KELNKRINQK (122 aa)) is domain IV, binds dsDNA.

Belongs to the DnaA family. In terms of assembly, oligomerizes as a right-handed, spiral filament on DNA at oriC.

It localises to the cytoplasm. Plays an essential role in the initiation and regulation of chromosomal replication. ATP-DnaA binds to the origin of replication (oriC) to initiate formation of the DNA replication initiation complex once per cell cycle. Binds the DnaA box (a 9 base pair repeat at the origin) and separates the double-stranded (ds)DNA. Forms a right-handed helical filament on oriC DNA; dsDNA binds to the exterior of the filament while single-stranded (ss)DNA is stabiized in the filament's interior. The ATP-DnaA-oriC complex binds and stabilizes one strand of the AT-rich DNA unwinding element (DUE), permitting loading of DNA polymerase. After initiation quickly degrades to an ADP-DnaA complex that is not apt for DNA replication. Binds acidic phospholipids. The protein is Chromosomal replication initiator protein DnaA of Clostridium botulinum (strain ATCC 19397 / Type A).